A 131-amino-acid polypeptide reads, in one-letter code: Aspartate 1-decarboxylase (131 aa).

The Schiff-base intermediate with substrate; via pyruvic acid role is filled by S25. The residue at position 25 (S25) is a Pyruvic acid (Ser). Residue T57 coordinates substrate. The Proton donor role is filled by Y58. 73-75 contributes to the substrate binding site; that stretch reads GAA.

It belongs to the PanD family. Heterooctamer of four alpha and four beta subunits. Pyruvate serves as cofactor. In terms of processing, is synthesized initially as an inactive proenzyme, which is activated by self-cleavage at a specific serine bond to produce a beta-subunit with a hydroxyl group at its C-terminus and an alpha-subunit with a pyruvoyl group at its N-terminus.

The protein localises to the cytoplasm. The catalysed reaction is L-aspartate + H(+) = beta-alanine + CO2. It participates in cofactor biosynthesis; (R)-pantothenate biosynthesis; beta-alanine from L-aspartate: step 1/1. In terms of biological role, catalyzes the pyruvoyl-dependent decarboxylation of aspartate to produce beta-alanine. The chain is Aspartate 1-decarboxylase from Chlorobium phaeobacteroides (strain DSM 266 / SMG 266 / 2430).